A 1138-amino-acid polypeptide reads, in one-letter code: Mastermind-like protein 3 (1138 aa).

Polar residues predominate over residues Pro-37 to His-48. Disordered regions lie at residues Pro-37–Pro-68, Glu-119–Glu-148, Arg-169–Thr-188, Pro-207–Pro-237, Glu-334–Lys-480, and Gln-503–Phe-547. The span at Gly-52–Ser-64 shows a compositional bias: gly residues. Polar residues-rich tracts occupy residues Gly-130–Gln-139 and Asn-173–Thr-188. 2 stretches are compositionally biased toward polar residues: residues Gln-343–Ser-359 and Gly-372–Leu-394. Positions Pro-395–Ala-411 are enriched in low complexity. Polar residues predominate over residues Ala-414–Thr-426. Positions Gln-467 to Lys-480 are enriched in low complexity. N6-acetyllysine is present on Lys-603. Disordered stretches follow at residues Arg-615–His-662, His-691–Gly-721, Leu-968–Gln-991, Ala-1024–Tyr-1084, and Gln-1090–Pro-1109. A compositionally biased stretch (low complexity) spans Gln-633–Gln-649. Over residues Pro-1064–Tyr-1084 the composition is skewed to polar residues.

Belongs to the mastermind family. Interacts through its N-terminal region with the ankyrin repeat region of the Notch proteins NOTCH1, NOTCH2, NOTCH3 and NOTCH4. Forms a DNA-binding complex with Notch proteins and RBPSUH/RBP-J kappa.

Its subcellular location is the nucleus speckle. Functionally, acts as a transcriptional coactivator for NOTCH proteins. Has been shown to amplify NOTCH-induced transcription of HES1. The polypeptide is Mastermind-like protein 3 (Homo sapiens (Human)).